A 284-amino-acid chain; its full sequence is Bifunctional protein FolD (284 aa).

NADP(+) is bound by residues 166–168 and Ile232; that span reads GAS.

The protein belongs to the tetrahydrofolate dehydrogenase/cyclohydrolase family. Homodimer.

The catalysed reaction is (6R)-5,10-methylene-5,6,7,8-tetrahydrofolate + NADP(+) = (6R)-5,10-methenyltetrahydrofolate + NADPH. It carries out the reaction (6R)-5,10-methenyltetrahydrofolate + H2O = (6R)-10-formyltetrahydrofolate + H(+). The protein operates within one-carbon metabolism; tetrahydrofolate interconversion. In terms of biological role, catalyzes the oxidation of 5,10-methylenetetrahydrofolate to 5,10-methenyltetrahydrofolate and then the hydrolysis of 5,10-methenyltetrahydrofolate to 10-formyltetrahydrofolate. The polypeptide is Bifunctional protein FolD (Shewanella baltica (strain OS195)).